The chain runs to 231 residues: Ribonuclease 3 (231 aa).

In terms of domain architecture, RNase III spans 6–135 (AAMLKERFGI…FVGALYLDQG (130 aa)). E48 is a binding site for Mg(2+). D52 is a catalytic residue. The Mg(2+) site is built by D121 and E124. E124 is a catalytic residue. In terms of domain architecture, DRBM spans 161–230 (DYKTTLQEYL…ARQAYSQLQQ (70 aa)). A disordered region spans residues 209–231 (WGHSKKEAEQSAARQAYSQLQQK). Over residues 220–231 (AARQAYSQLQQK) the composition is skewed to polar residues.

Belongs to the ribonuclease III family. In terms of assembly, homodimer. Requires Mg(2+) as cofactor.

Its subcellular location is the cytoplasm. The enzyme catalyses Endonucleolytic cleavage to 5'-phosphomonoester.. Digests double-stranded RNA. Involved in the processing of primary rRNA transcript to yield the immediate precursors to the large and small rRNAs (23S and 16S). Processes some mRNAs, and tRNAs when they are encoded in the rRNA operon. Processes pre-crRNA and tracrRNA of type II CRISPR loci if present in the organism. The polypeptide is Ribonuclease 3 (Lactiplantibacillus plantarum (strain ATCC BAA-793 / NCIMB 8826 / WCFS1) (Lactobacillus plantarum)).